Here is a 443-residue protein sequence, read N- to C-terminus: Probable D-serine dehydratase (443 aa).

Lysine 116 is subject to N6-(pyridoxal phosphate)lysine.

Belongs to the serine/threonine dehydratase family. DsdA subfamily. Pyridoxal 5'-phosphate is required as a cofactor.

It carries out the reaction D-serine = pyruvate + NH4(+). The polypeptide is Probable D-serine dehydratase (Bacillus cereus (strain B4264)).